We begin with the raw amino-acid sequence, 387 residues long: tRNA N6-adenosine threonylcarbamoyltransferase (387 aa).

Residues histidine 112 and histidine 116 each coordinate Fe cation. Residues 134–138, aspartate 167, glycine 180, and asparagine 325 each bind substrate; that span reads LASGG. Residue aspartate 353 coordinates Fe cation.

This sequence belongs to the KAE1 / TsaD family. The cofactor is Fe(2+).

It localises to the cytoplasm. The catalysed reaction is L-threonylcarbamoyladenylate + adenosine(37) in tRNA = N(6)-L-threonylcarbamoyladenosine(37) in tRNA + AMP + H(+). Its function is as follows. Required for the formation of a threonylcarbamoyl group on adenosine at position 37 (t(6)A37) in tRNAs that read codons beginning with adenine. Is involved in the transfer of the threonylcarbamoyl moiety of threonylcarbamoyl-AMP (TC-AMP) to the N6 group of A37, together with TsaE and TsaB. TsaD likely plays a direct catalytic role in this reaction. The sequence is that of tRNA N6-adenosine threonylcarbamoyltransferase from Rickettsia prowazekii (strain Madrid E).